We begin with the raw amino-acid sequence, 240 residues long: Citrate synthase-lysine N-methyltransferase CSKMT, mitochondrial (240 aa).

The N-terminal 28 residues, 1 to 28 (MAALRRMLHLPSLMMGTCRPFAGSLADS), are a transit peptide targeting the mitochondrion.

Belongs to the methyltransferase superfamily.

The protein resides in the mitochondrion. The enzyme catalyses L-lysyl-[citrate synthase] + S-adenosyl-L-methionine = N(6)-methyl-L-lysyl-[citrate synthase] + S-adenosyl-L-homocysteine + H(+). It catalyses the reaction N(6)-methyl-L-lysyl-[citrate synthase] + S-adenosyl-L-methionine = N(6),N(6)-dimethyl-L-lysyl-[citrate synthase] + S-adenosyl-L-homocysteine + H(+). The catalysed reaction is N(6),N(6)-dimethyl-L-lysyl-[citrate synthase] + S-adenosyl-L-methionine = N(6),N(6),N(6)-trimethyl-L-lysyl-[citrate synthase] + S-adenosyl-L-homocysteine + H(+). Citrate synthase-lysine methyltransferase activity is inhibited by S-adenosylhomocysteine (AdoHcy) and oxaloacetate (OAA). In terms of biological role, protein-lysine methyltransferase that selectively trimethylates citrate synthase (CS) in mitochondria. Seems to conduct trimethylation in a highly distributive manner rather than in a processive manner, and thus introduces a single methyl group per binding event. This Homo sapiens (Human) protein is Citrate synthase-lysine N-methyltransferase CSKMT, mitochondrial.